The chain runs to 194 residues: Imidazoleglycerol-phosphate dehydratase (194 aa).

It belongs to the imidazoleglycerol-phosphate dehydratase family.

It localises to the cytoplasm. It carries out the reaction D-erythro-1-(imidazol-4-yl)glycerol 3-phosphate = 3-(imidazol-4-yl)-2-oxopropyl phosphate + H2O. The protein operates within amino-acid biosynthesis; L-histidine biosynthesis; L-histidine from 5-phospho-alpha-D-ribose 1-diphosphate: step 6/9. The chain is Imidazoleglycerol-phosphate dehydratase from Methanothermobacter thermautotrophicus (strain ATCC 29096 / DSM 1053 / JCM 10044 / NBRC 100330 / Delta H) (Methanobacterium thermoautotrophicum).